We begin with the raw amino-acid sequence, 162 residues long: Shikimate kinase (162 aa).

11–16 lines the ATP pocket; it reads GSGKSS. Serine 15 is a Mg(2+) binding site. Positions 33, 57, and 80 each coordinate substrate. Arginine 116 contacts ATP. Residue arginine 132 coordinates substrate.

It belongs to the shikimate kinase family. In terms of assembly, monomer. Mg(2+) is required as a cofactor.

It is found in the cytoplasm. It carries out the reaction shikimate + ATP = 3-phosphoshikimate + ADP + H(+). It functions in the pathway metabolic intermediate biosynthesis; chorismate biosynthesis; chorismate from D-erythrose 4-phosphate and phosphoenolpyruvate: step 5/7. Catalyzes the specific phosphorylation of the 3-hydroxyl group of shikimic acid using ATP as a cosubstrate. In Helicobacter pylori (strain G27), this protein is Shikimate kinase.